A 306-amino-acid polypeptide reads, in one-letter code: Ornithine carbamoyltransferase (306 aa).

Carbamoyl phosphate is bound by residues 53–56 (STRT), Gln80, Arg104, and 131–134 (HPCQ). Residues Asn162, Asp219, and 223 to 224 (SM) each bind L-ornithine. Carbamoyl phosphate contacts are provided by residues 259–260 (CL) and Arg287.

This sequence belongs to the aspartate/ornithine carbamoyltransferase superfamily. OTCase family.

The protein localises to the cytoplasm. The enzyme catalyses carbamoyl phosphate + L-ornithine = L-citrulline + phosphate + H(+). It functions in the pathway amino-acid biosynthesis; L-arginine biosynthesis; L-arginine from L-ornithine and carbamoyl phosphate: step 1/3. Functionally, reversibly catalyzes the transfer of the carbamoyl group from carbamoyl phosphate (CP) to the N(epsilon) atom of ornithine (ORN) to produce L-citrulline. This chain is Ornithine carbamoyltransferase, found in Acinetobacter baylyi (strain ATCC 33305 / BD413 / ADP1).